The primary structure comprises 101 residues: RNA-binding protein Hfq (101 aa).

Positions 9 to 68 constitute a Sm domain; it reads DPYLNALRRERIPVSIYLVNGIKLQGQIESFDQFIILLKNTVSQMVYKHAISTVVPARSI. The disordered stretch occupies residues 68–91; sequence ISHNNNGSSQAQAPQQAVQTTQPV. A compositionally biased stretch (low complexity) spans 77–91; it reads QAQAPQQAVQTTQPV.

Belongs to the Hfq family. In terms of assembly, homohexamer.

Its function is as follows. RNA chaperone that binds small regulatory RNA (sRNAs) and mRNAs to facilitate mRNA translational regulation in response to envelope stress, environmental stress and changes in metabolite concentrations. Also binds with high specificity to tRNAs. This Haemophilus ducreyi (strain 35000HP / ATCC 700724) protein is RNA-binding protein Hfq.